The sequence spans 151 residues: SsrA-binding protein (151 aa).

The tract at residues 132-151 (KRQTIKKRDQDREIHRKYGI) is disordered.

The protein belongs to the SmpB family.

The protein resides in the cytoplasm. In terms of biological role, required for rescue of stalled ribosomes mediated by trans-translation. Binds to transfer-messenger RNA (tmRNA), required for stable association of tmRNA with ribosomes. tmRNA and SmpB together mimic tRNA shape, replacing the anticodon stem-loop with SmpB. tmRNA is encoded by the ssrA gene; the 2 termini fold to resemble tRNA(Ala) and it encodes a 'tag peptide', a short internal open reading frame. During trans-translation Ala-aminoacylated tmRNA acts like a tRNA, entering the A-site of stalled ribosomes, displacing the stalled mRNA. The ribosome then switches to translate the ORF on the tmRNA; the nascent peptide is terminated with the 'tag peptide' encoded by the tmRNA and targeted for degradation. The ribosome is freed to recommence translation, which seems to be the essential function of trans-translation. This chain is SsrA-binding protein, found in Lactobacillus gasseri (strain ATCC 33323 / DSM 20243 / BCRC 14619 / CIP 102991 / JCM 1131 / KCTC 3163 / NCIMB 11718 / NCTC 13722 / AM63).